A 407-amino-acid polypeptide reads, in one-letter code: M protein, serotype 2.1 (407 aa).

The signal sequence occupies residues 1–41; sequence MARKDTNKQYSLRKLKTGTASVAVAVAVLGAGFANQTTVKA. Residues 81–94 are 2 X 7 AA tandem repeats; that stretch reads VEEEHKKVEEEHKK. Basic and acidic residues-rich tracts occupy residues 83–144, 152–229, 237–264, and 272–288; these read EEHK…KRYQ, QLEK…EKQI, LSRD…EKQI, and LSRD…KVEA. The tract at residues 83–289 is disordered; sequence EEHKKVEEEH…REAKKKVEAD (207 aa). 4 C repeats span residues 151 to 185, 186 to 220, 221 to 255, and 256 to 290; these read QQLE…EAEH, QKLK…EAEH, and QKLK…EADL. D repeat units follow at residues 323-328, 329-334, 337-342, and 344-349; these read AKLEAE, AKALKE, AKQAEE, and AKLKGN. The tract at residues 344 to 382 is disordered; sequence AKLKGNQTPNAKVAPQANRSRSAMTQQKRTLPSTGETAN. Polar residues predominate over residues 360–380; the sequence is ANRSRSAMTQQKRTLPSTGET. The LPXTG sorting signal motif lies at 374 to 378; it reads LPSTG. The residue at position 377 (T377) is a Pentaglycyl murein peptidoglycan amidated threonine. The propeptide at 378–407 is removed by sortase; the sequence is GETANPFFTAAAATVMVSAGMLALKRKEEN.

This sequence belongs to the M protein family.

The protein localises to the secreted. It is found in the cell wall. This protein is one of the different antigenic serotypes of protein M. Protein M is closely associated with virulence of the bacterium and can render the organism resistant to phagocytosis. The chain is M protein, serotype 2.1 (emmL2.1) from Streptococcus pyogenes.